Consider the following 2263-residue polypeptide: Collagen alpha-6(VI) chain (2263 aa).

A signal peptide spans 1 to 19 (MMLLILFLVIICSHISVNQ). The interval 20–1391 (DSGPEYADVV…TCCCLFCKCI (1372 aa)) is nonhelical region. 5 VWFA domains span residues 27–206 (DVVF…IKDV), 229–411 (DVVF…RNQI), 436–606 (DIYL…RNQV), 622–791 (DIMF…EDDL), and 809–982 (DVVF…FSDV). 5 N-linked (GlcNAc...) asparagine glycosylation sites follow: N198, N275, N288, N347, and N520. N-linked (GlcNAc...) asparagine glycosylation is found at N930 and N988. VWFA domains lie at 1000–1171 (DLVF…NKRI) and 1187–1371 (DVVV…GSRL). N1290 carries an N-linked (GlcNAc...) asparagine glycan. The triple-helical region stretch occupies residues 1392–1725 (GGDGTMGDPG…GRKGVKGAKG (334 aa)). A disordered region spans residues 1397 to 1723 (MGDPGPPGKR…PPGRKGVKGA (327 aa)). A compositionally biased stretch (basic and acidic residues) spans 1498–1508 (TPGDRGAKGLR). A Cell attachment site motif is present at residues 1508 to 1510 (RGD). The segment covering 1547-1559 (SRRKTAAHGRRGH) has biased composition (basic residues). The span at 1680–1689 (GDPGGPGETG) shows a compositional bias: gly residues. The tract at residues 1726 to 2263 (LASFSTCELI…MIESAPKQHD (538 aa)) is nonhelical region. 2 consecutive VWFA domains span residues 1757 to 1937 (ELVF…ERLQ) and 1965 to 2166 (DAAF…INSI).

This sequence belongs to the type VI collagen family. In terms of assembly, trimers composed of three different chains: alpha-1(VI), alpha-2(VI), and alpha-3(VI) or alpha-5(VI) or alpha-6(VI). In terms of processing, prolines at the third position of the tripeptide repeating unit (G-X-Y) are hydroxylated in some or all of the chains.

It localises to the secreted. Its subcellular location is the extracellular space. The protein localises to the extracellular matrix. Its function is as follows. Collagen VI acts as a cell-binding protein. The protein is Collagen alpha-6(VI) chain (COL6A6) of Homo sapiens (Human).